The sequence spans 383 residues: Meiotic recombination protein SPO11-2 (383 aa).

The 144-residue stretch at 24 to 167 folds into the Topo IIA-type catalytic domain; that stretch reads LLPHEARARI…LGIMASSRGL (144 aa). Y124 serves as the catalytic O-(5'-phospho-DNA)-tyrosine intermediate. Mg(2+) contacts are provided by E217 and D270.

The protein belongs to the TOP6A family. Heterotetramer of 2 SPO11 (SPO11-1 and/or SPO11-2) and 2 MTOPVIB chains. Interacts with MTOPVIB. May form a heterodimer with SPO11-1. Interacts with PRD1. Does not interact with TOP6B. It depends on Mg(2+) as a cofactor. In terms of tissue distribution, very low expression in flowers and shoots.

Its subcellular location is the nucleus. The enzyme catalyses ATP-dependent breakage, passage and rejoining of double-stranded DNA.. Component of a topoisomerase 6 complex specifically required for meiotic recombination. Together with MTOPVIB, mediates DNA cleavage that forms the double-strand breaks (DSB) that initiate meiotic recombination. The complex promotes relaxation of negative and positive supercoiled DNA and DNA decatenation through cleavage and ligation cycles. This chain is Meiotic recombination protein SPO11-2 (SPO11-2), found in Arabidopsis thaliana (Mouse-ear cress).